The sequence spans 158 residues: Succinate dehydrogenase assembly factor 2, mitochondrial (158 aa).

Residues 1–17 (MFSANIARKVVCSVCRA) constitute a mitochondrion transit peptide.

This sequence belongs to the SDHAF2 family. As to quaternary structure, interacts with sdha within the SDH catalytic dimer.

The protein resides in the mitochondrion matrix. Functionally, plays an essential role in the assembly of succinate dehydrogenase (SDH), an enzyme complex (also referred to as respiratory complex II) that is a component of both the tricarboxylic acid (TCA) cycle and the mitochondrial electron transport chain, and which couples the oxidation of succinate to fumarate with the reduction of ubiquinone (coenzyme Q) to ubiquinol. Required for flavinylation (covalent attachment of FAD) of the flavoprotein subunit sdha of the SDH catalytic dimer. The polypeptide is Succinate dehydrogenase assembly factor 2, mitochondrial (Danio rerio (Zebrafish)).